An 811-amino-acid chain; its full sequence is G-type lectin S-receptor-like serine/threonine-protein kinase LECRK2 (811 aa).

A signal peptide spans 1–23 (MAPILFLPILQILLIYCTKSAQA). The Bulb-type lectin domain occupies 24–153 (QLNISIGSSL…DGATKWESFG (130 aa)). The Extracellular portion of the chain corresponds to 24–464 (QLNISIGSSL…DKKYWILGSS (441 aa)). Residues Asn26, Asn39, Asn59, Asn219, Asn226, Asn237, and Asn242 are each glycosylated (N-linked (GlcNAc...) asparagine). One can recognise an EGF-like; atypical domain in the interval 292-344 (PENICQTIQTKVGSGACGFNSYCTFDGTKNTTNCLCPQRYKFFDNERTYKGCR). 5 disulfide bridges follow: Cys296–Cys314, Cys308–Cys325, Cys327–Cys343, Cys389–Cys411, and Cys393–Cys399. A glycan (N-linked (GlcNAc...) asparagine) is linked at Asn321. A PAN domain is found at 352-436 (CDLDETAAMV…LQATVLLKVP (85 aa)). Residues 465 to 485 (LFFGSSVLVNFLLIFVLLFGT) form a helical membrane-spanning segment. Topologically, residues 486 to 811 (YCSITSRKKT…DPSSYISSLA (326 aa)) are cytoplasmic. One can recognise a Protein kinase domain in the interval 521-795 (GGFHEVLGTG…KVMQMLDGAV (275 aa)). ATP is bound by residues 527–535 (LGTGASGIV) and Lys551. The active-site Proton acceptor is the Asp645.

This sequence belongs to the protein kinase superfamily. Ser/Thr protein kinase family.

It localises to the membrane. It catalyses the reaction L-seryl-[protein] + ATP = O-phospho-L-seryl-[protein] + ADP + H(+). The catalysed reaction is L-threonyl-[protein] + ATP = O-phospho-L-threonyl-[protein] + ADP + H(+). Involved in resistance against the herbivorous insect brown planthopper (N.lugens, BPH). Member of the BPH3 (BPH resistance locus 3) cluster which contains LECRK1, LECRK2 and LECRK3. The sequence is that of G-type lectin S-receptor-like serine/threonine-protein kinase LECRK2 from Oryza sativa subsp. indica (Rice).